Here is a 243-residue protein sequence, read N- to C-terminus: UPF0758 protein MAE_44350 (243 aa).

The region spanning 113–235 is the MPN domain; it reads VIDSPDTAAA…FQSLRQITDL (123 aa). Histidine 184, histidine 186, and aspartate 197 together coordinate Zn(2+). A JAMM motif motif is present at residues 184-197; that stretch reads HNHPTGSLVPSQDD.

It belongs to the UPF0758 family.

This is UPF0758 protein MAE_44350 from Microcystis aeruginosa (strain NIES-843 / IAM M-2473).